A 455-amino-acid polypeptide reads, in one-letter code: F-box/LRR-repeat protein At5g35995 (455 aa).

The 48-residue stretch at 4–51 folds into the F-box domain; sequence RDFISSLPDEVLGKKILSLLPTKLVVSTSVLSKRWRNLFHFVDSFDLE. LRR repeat units lie at residues 114-138, 152-176, 282-305, 308-324, and 325-348; these read DHYL…SYRT, FPAL…LISG, IRNV…CYTM, FDKL…ENGW, and QALP…LLHK.

In Arabidopsis thaliana (Mouse-ear cress), this protein is F-box/LRR-repeat protein At5g35995.